The primary structure comprises 149 residues: Transcription antitermination protein NusB (149 aa).

This sequence belongs to the NusB family.

Its function is as follows. Involved in transcription antitermination. Required for transcription of ribosomal RNA (rRNA) genes. Binds specifically to the boxA antiterminator sequence of the ribosomal RNA (rrn) operons. The chain is Transcription antitermination protein NusB from Sphingopyxis alaskensis (strain DSM 13593 / LMG 18877 / RB2256) (Sphingomonas alaskensis).